Consider the following 154-residue polypeptide: Deoxyuridine 5'-triphosphate nucleotidohydrolase (154 aa).

Substrate contacts are provided by residues 64 to 66 (RSG), Asn-77, 81 to 83 (TID), and Lys-91.

This sequence belongs to the dUTPase family. As to quaternary structure, homotrimer. Mg(2+) serves as cofactor.

The catalysed reaction is dUTP + H2O = dUMP + diphosphate + H(+). Its pathway is pyrimidine metabolism; dUMP biosynthesis; dUMP from dCTP (dUTP route): step 2/2. Its function is as follows. This enzyme is involved in nucleotide metabolism: it produces dUMP, the immediate precursor of thymidine nucleotides and it decreases the intracellular concentration of dUTP so that uracil cannot be incorporated into DNA. This chain is Deoxyuridine 5'-triphosphate nucleotidohydrolase, found in Mycobacterium bovis (strain BCG / Pasteur 1173P2).